The chain runs to 1320 residues: Bifunctional protein PutA (1320 aa).

Residues 228 to 574 (LSRSLNRIIG…SFVNRIADAT (347 aa)) form a proline dehydrogenase region. The tract at residues 653 to 1119 (QPVADGEMTP…LAHRPPNALN (467 aa)) is aldehyde dehydrogenase. Residues E883 and C917 contribute to the active site.

It in the N-terminal section; belongs to the proline dehydrogenase family. In the C-terminal section; belongs to the aldehyde dehydrogenase family. FAD serves as cofactor.

The enzyme catalyses L-proline + a quinone = (S)-1-pyrroline-5-carboxylate + a quinol + H(+). It carries out the reaction L-glutamate 5-semialdehyde + NAD(+) + H2O = L-glutamate + NADH + 2 H(+). The protein operates within amino-acid degradation; L-proline degradation into L-glutamate; L-glutamate from L-proline: step 1/2. Its pathway is amino-acid degradation; L-proline degradation into L-glutamate; L-glutamate from L-proline: step 2/2. Oxidizes proline to glutamate for use as a carbon and nitrogen source and also function as a transcriptional repressor of the put operon. This chain is Bifunctional protein PutA (putA), found in Salmonella typhimurium (strain LT2 / SGSC1412 / ATCC 700720).